The following is a 362-amino-acid chain: Manganese peroxidase 3 (362 aa).

The first 18 residues, Met-1 to Ala-18, serve as a signal peptide directing secretion. Positions Ala-19–Arg-23 are excised as a propeptide. 4 disulfide bridges follow: Cys-26–Cys-39, Cys-38–Cys-309, Cys-58–Cys-144, and Cys-273–Cys-338. Glu-60 and Glu-64 together coordinate Mn(2+). His-71 serves as the catalytic Proton acceptor. Ca(2+)-binding residues include Asp-72, Gly-90, Asp-92, and Ser-94. Asn-126 carries N-linked (GlcNAc...) asparagine glycosylation. Heme b is bound at residue His-200. Thr-201 serves as a coordination point for Ca(2+). Asp-206 provides a ligand contact to Mn(2+). Ca(2+)-binding residues include Asp-218, Thr-220, Ile-223, and Asp-225. A disordered region spans residues Thr-341–Ser-362.

This sequence belongs to the peroxidase family. Ligninase subfamily. It depends on heme b as a cofactor. Ca(2+) is required as a cofactor.

The protein localises to the secreted. It catalyses the reaction 2 Mn(2+) + H2O2 + 2 H(+) = 2 Mn(3+) + 2 H2O. Its function is as follows. Catalyzes the oxidation of Mn(2+) to Mn(3+). The latter, acting as a diffusible redox mediator, is capable of oxidizing a variety of lignin compounds. This isozyme is also able to oxidize phenols and amines in the absence of Mn(2+), similar to versatile peroxidases. This chain is Manganese peroxidase 3 (mnp3), found in Phlebia radiata (White-rot fungus).